A 361-amino-acid polypeptide reads, in one-letter code: Queuine tRNA-ribosyltransferase (361 aa).

Residue Asp-92 is the Proton acceptor of the active site. Substrate-binding positions include Asp-92 to Phe-96, Asp-146, Gln-189, and Gly-216. The segment at Gly-247 to Asp-253 is RNA binding. Asp-266 functions as the Nucleophile in the catalytic mechanism. The tract at residues Thr-271 to Arg-275 is RNA binding; important for wobble base 34 recognition. The Zn(2+) site is built by Cys-304, Cys-306, Cys-309, and His-335.

The protein belongs to the queuine tRNA-ribosyltransferase family. In terms of assembly, homodimer. Within each dimer, one monomer is responsible for RNA recognition and catalysis, while the other monomer binds to the replacement base PreQ1. It depends on Zn(2+) as a cofactor.

The catalysed reaction is 7-aminomethyl-7-carbaguanine + guanosine(34) in tRNA = 7-aminomethyl-7-carbaguanosine(34) in tRNA + guanine. It participates in tRNA modification; tRNA-queuosine biosynthesis. In terms of biological role, catalyzes the base-exchange of a guanine (G) residue with the queuine precursor 7-aminomethyl-7-deazaguanine (PreQ1) at position 34 (anticodon wobble position) in tRNAs with GU(N) anticodons (tRNA-Asp, -Asn, -His and -Tyr). Catalysis occurs through a double-displacement mechanism. The nucleophile active site attacks the C1' of nucleotide 34 to detach the guanine base from the RNA, forming a covalent enzyme-RNA intermediate. The proton acceptor active site deprotonates the incoming PreQ1, allowing a nucleophilic attack on the C1' of the ribose to form the product. After dissociation, two additional enzymatic reactions on the tRNA convert PreQ1 to queuine (Q), resulting in the hypermodified nucleoside queuosine (7-(((4,5-cis-dihydroxy-2-cyclopenten-1-yl)amino)methyl)-7-deazaguanosine). This chain is Queuine tRNA-ribosyltransferase, found in Rickettsia felis (strain ATCC VR-1525 / URRWXCal2) (Rickettsia azadi).